The sequence spans 162 residues: MDETPELEKATFGAGCFWHVEAEFRRVSGVVATHAGYMGGWKDHPTYEEVCSKETGHAEVVEVVYDPARVSYDELLRIFWTIHDPTQLNRQGPDIGTNYRSVIFFHTPEQEQAARLSMEKEGGSGRYSRPIVTEIASASAFWWAEEYHQQYLEKRGGGSCNW.

C16 is a catalytic residue.

The protein belongs to the MsrA Met sulfoxide reductase family.

It carries out the reaction L-methionyl-[protein] + [thioredoxin]-disulfide + H2O = L-methionyl-(S)-S-oxide-[protein] + [thioredoxin]-dithiol. The catalysed reaction is [thioredoxin]-disulfide + L-methionine + H2O = L-methionine (S)-S-oxide + [thioredoxin]-dithiol. In terms of biological role, has an important function as a repair enzyme for proteins that have been inactivated by oxidation. Catalyzes the reversible oxidation-reduction of methionine sulfoxide in proteins to methionine. The protein is Peptide methionine sulfoxide reductase MsrA of Geobacter metallireducens (strain ATCC 53774 / DSM 7210 / GS-15).